A 652-amino-acid polypeptide reads, in one-letter code: Acetyl-coenzyme A synthetase (652 aa).

Residues 189–192 (RGGK) and Ser311 each bind CoA. ATP-binding positions include 387–389 (GEP), 411–416 (DTWWQT), Asp500, and Arg515. Ser523 provides a ligand contact to CoA. Residue Arg526 participates in ATP binding. Residues Val537, His539, and Ile542 each contribute to the Mg(2+) site. Residue Lys584 participates in CoA binding. Lys609 bears the N6-acetyllysine mark.

The protein belongs to the ATP-dependent AMP-binding enzyme family. Requires Mg(2+) as cofactor. Post-translationally, acetylated. Deacetylation by the SIR2-homolog deacetylase activates the enzyme.

The catalysed reaction is acetate + ATP + CoA = acetyl-CoA + AMP + diphosphate. Functionally, catalyzes the conversion of acetate into acetyl-CoA (AcCoA), an essential intermediate at the junction of anabolic and catabolic pathways. AcsA undergoes a two-step reaction. In the first half reaction, AcsA combines acetate with ATP to form acetyl-adenylate (AcAMP) intermediate. In the second half reaction, it can then transfer the acetyl group from AcAMP to the sulfhydryl group of CoA, forming the product AcCoA. The chain is Acetyl-coenzyme A synthetase from Bartonella quintana (strain Toulouse) (Rochalimaea quintana).